The sequence spans 182 residues: NADH-quinone oxidoreductase subunit I (182 aa).

4Fe-4S ferredoxin-type domains are found at residues 52-82 (LTRDPDGEERCVACNLCAVACPVGCISLQKA) and 92-121 (DFFRINFSRCIFCGLCEEACPTTAIQLTPD). [4Fe-4S] cluster-binding residues include Cys-62, Cys-65, Cys-68, Cys-72, Cys-101, Cys-104, Cys-107, and Cys-111.

The protein belongs to the complex I 23 kDa subunit family. As to quaternary structure, NDH-1 is composed of 13 different subunits. Subunits NuoA, H, J, K, L, M, N constitute the membrane sector of the complex. Requires [4Fe-4S] cluster as cofactor.

It localises to the cell inner membrane. The enzyme catalyses a quinone + NADH + 5 H(+)(in) = a quinol + NAD(+) + 4 H(+)(out). NDH-1 shuttles electrons from NADH, via FMN and iron-sulfur (Fe-S) centers, to quinones in the respiratory chain. The immediate electron acceptor for the enzyme in this species is believed to be ubiquinone. Couples the redox reaction to proton translocation (for every two electrons transferred, four hydrogen ions are translocated across the cytoplasmic membrane), and thus conserves the redox energy in a proton gradient. In Pseudomonas syringae pv. tomato (strain ATCC BAA-871 / DC3000), this protein is NADH-quinone oxidoreductase subunit I.